The sequence spans 371 residues: Loganic acid O-methyltransferase (371 aa).

S-adenosyl-L-homocysteine is bound at residue Y31. Residues Y37 and Q38 each contribute to the loganate site. C78, N83, D114, H115, S141, and F142 together coordinate S-adenosyl-L-homocysteine. Loganate contacts are provided by H162 and W163. Mg(2+) is bound at residue N180. Loganate contacts are provided by A241 and H245. Mg(2+) is bound by residues D267, F269, and N270. Residues Q273 and Q316 each coordinate loganate.

This sequence belongs to the methyltransferase superfamily. Type-7 methyltransferase family. In terms of assembly, homodimer. Requires Mg(2+) as cofactor. In terms of tissue distribution, expressed in leaves (especially in leaf epidermis), flowers, siliques and stems, and, at low levels, in hairy roots.

The catalysed reaction is loganate + S-adenosyl-L-methionine = loganin + S-adenosyl-L-homocysteine. It functions in the pathway alkaloid biosynthesis. With respect to regulation, strongly repressed by loganin and slightly by S-adenosyl-L-homocysteine. Its function is as follows. Component of the seco-iridoid and derivatives monoterpenoid indole alkaloids (MIAs, e.g. vinblastine and ajmalicine) biosynthesis pathway. Catalyzes the methylation of loganic acid (6S,7R) to produce loganin. Weak activity with secologanic acid as substrate. Inactive on deoxyloganic, dehydrologanic, epiloganic and loganetic acid. The chain is Loganic acid O-methyltransferase from Catharanthus roseus (Madagascar periwinkle).